Consider the following 160-residue polypeptide: 2-C-methyl-D-erythritol 2,4-cyclodiphosphate synthase (160 aa).

Residues Asp-11 and His-13 each coordinate a divalent metal cation. 4-CDP-2-C-methyl-D-erythritol 2-phosphate contacts are provided by residues 11 to 13 (DIH) and 37 to 38 (HS). His-45 serves as a coordination point for a divalent metal cation. 4-CDP-2-C-methyl-D-erythritol 2-phosphate is bound by residues 59 to 61 (DIG), 135 to 138 (TTNE), and Arg-145.

The protein belongs to the IspF family. In terms of assembly, homotrimer. It depends on a divalent metal cation as a cofactor.

The enzyme catalyses 4-CDP-2-C-methyl-D-erythritol 2-phosphate = 2-C-methyl-D-erythritol 2,4-cyclic diphosphate + CMP. Its pathway is isoprenoid biosynthesis; isopentenyl diphosphate biosynthesis via DXP pathway; isopentenyl diphosphate from 1-deoxy-D-xylulose 5-phosphate: step 4/6. Involved in the biosynthesis of isopentenyl diphosphate (IPP) and dimethylallyl diphosphate (DMAPP), two major building blocks of isoprenoid compounds. Catalyzes the conversion of 4-diphosphocytidyl-2-C-methyl-D-erythritol 2-phosphate (CDP-ME2P) to 2-C-methyl-D-erythritol 2,4-cyclodiphosphate (ME-CPP) with a corresponding release of cytidine 5-monophosphate (CMP). This chain is 2-C-methyl-D-erythritol 2,4-cyclodiphosphate synthase, found in Nostoc punctiforme (strain ATCC 29133 / PCC 73102).